Consider the following 311-residue polypeptide: MSQNQEISKKEQYNLNKLQKRLRRNVGEAIADFNMIEEGDRIMVCLSGGKDSYTMLEILRNLQQSAPINFSLVAVNLDQKQPGFPEHVLPEYLEKLGVEYKIVEENTYGIVKEKIPEGKTTCSLCSRLRRGILYRTATELGATKIALGHHRDDILQTLFLNMFYGGKMKGMPPKLMSDDGKHIVIRPLAYCREKDIQRFADAKAFPIIPCNLCGSQPNLQRQVIADMLRDWDKRYPGRIETMFSAMQNVVPSHLCDTNLFDFKGITHGSEVVNGGDLAFDREEIPLQPAGWQPEEDENQLDELRLNVVEVK.

The PP-loop motif motif lies at S47 to S52. Residues C122, C125, and C213 each contribute to the [4Fe-4S] cluster site.

It belongs to the TtcA family. Homodimer. Requires Mg(2+) as cofactor. [4Fe-4S] cluster serves as cofactor.

It is found in the cytoplasm. It carries out the reaction cytidine(32) in tRNA + S-sulfanyl-L-cysteinyl-[cysteine desulfurase] + AH2 + ATP = 2-thiocytidine(32) in tRNA + L-cysteinyl-[cysteine desulfurase] + A + AMP + diphosphate + H(+). The protein operates within tRNA modification. In terms of biological role, catalyzes the ATP-dependent 2-thiolation of cytidine in position 32 of tRNA, to form 2-thiocytidine (s(2)C32). The sulfur atoms are provided by the cysteine/cysteine desulfurase (IscS) system. The sequence is that of tRNA-cytidine(32) 2-sulfurtransferase from Escherichia coli O139:H28 (strain E24377A / ETEC).